The primary structure comprises 236 residues: Orotidine 5'-phosphate decarboxylase (236 aa).

Substrate is bound by residues aspartate 16, lysine 38, 65–74, threonine 124, arginine 185, glutamine 194, glycine 214, and arginine 215; that span reads DLKYHDIPNT. Catalysis depends on lysine 67, which acts as the Proton donor.

This sequence belongs to the OMP decarboxylase family. Type 1 subfamily. Homodimer.

It catalyses the reaction orotidine 5'-phosphate + H(+) = UMP + CO2. It functions in the pathway pyrimidine metabolism; UMP biosynthesis via de novo pathway; UMP from orotate: step 2/2. Catalyzes the decarboxylation of orotidine 5'-monophosphate (OMP) to uridine 5'-monophosphate (UMP). This is Orotidine 5'-phosphate decarboxylase from Hydrogenovibrio crunogenus (strain DSM 25203 / XCL-2) (Thiomicrospira crunogena).